We begin with the raw amino-acid sequence, 430 residues long: Elongation factor 1-alpha (430 aa).

Residues 7-219 (KPHVNIVFIG…DQIPEPEKPV (213 aa)) enclose the tr-type G domain. The G1 stretch occupies residues 16–23 (GHVDHGKS). 16 to 23 (GHVDHGKS) lines the GTP pocket. S23 contacts Mg(2+). Positions 70–74 (GITID) are G2. Residues 91–94 (DAPG) form a G3 region. GTP contacts are provided by residues 91–95 (DAPGH) and 146–149 (NKMD). Positions 146–149 (NKMD) are G4. Residues 183-185 (SAW) form a G5 region.

Belongs to the TRAFAC class translation factor GTPase superfamily. Classic translation factor GTPase family. EF-Tu/EF-1A subfamily.

The protein localises to the cytoplasm. It carries out the reaction GTP + H2O = GDP + phosphate + H(+). GTP hydrolase that promotes the GTP-dependent binding of aminoacyl-tRNA to the A-site of ribosomes during protein biosynthesis. This Pyrococcus woesei protein is Elongation factor 1-alpha.